Consider the following 764-residue polypeptide: DNA replication regulator DPB11 (764 aa).

3 consecutive BRCT domains span residues 1-99, 129-220, and 322-418; these read MKPF…MTGS, TNIT…PYYL, and NSTL…DLWS. 2 disordered regions span residues 651–675 and 710–764; these read ETDSGRKKRSVSSSIMDVSSERQMP and TEQP…ELDS. Residues 739-751 show a composition bias toward basic and acidic residues; it reads QDKKRTASLEKPM.

In terms of assembly, interacts with SLD2.

It localises to the nucleus. Its function is as follows. Has a role in the initiation of DNA replication. Required at S-phase checkpoint. Required for the association of PSF1 with origins. Also required for the proper activation of RAD53 in response to DNA damage and replication blocks. Multicopy suppressor of DPB2 mutation. Overexpression restores the growth defect conferred by POL2 mutation. This chain is DNA replication regulator DPB11 (DPB11), found in Saccharomyces cerevisiae (strain ATCC 204508 / S288c) (Baker's yeast).